A 338-amino-acid chain; its full sequence is tRNA pseudouridine synthase D (338 aa).

Aspartate 79 functions as the Nucleophile in the catalytic mechanism. The TRUD domain maps to 154–303 (GVPNYFGEQR…EEAWRANILY (150 aa)).

It belongs to the pseudouridine synthase TruD family.

It catalyses the reaction uridine(13) in tRNA = pseudouridine(13) in tRNA. In terms of biological role, responsible for synthesis of pseudouridine from uracil-13 in transfer RNAs. This is tRNA pseudouridine synthase D from Legionella pneumophila (strain Corby).